The primary structure comprises 438 residues: Serine hydroxymethyltransferase 1 (438 aa).

(6S)-5,6,7,8-tetrahydrofolate-binding positions include leucine 130 and glycine 134 to leucine 136. Position 239 is an N6-(pyridoxal phosphate)lysine (lysine 239).

It belongs to the SHMT family. As to quaternary structure, homodimer. Pyridoxal 5'-phosphate is required as a cofactor.

It is found in the cytoplasm. The enzyme catalyses (6R)-5,10-methylene-5,6,7,8-tetrahydrofolate + glycine + H2O = (6S)-5,6,7,8-tetrahydrofolate + L-serine. Its pathway is one-carbon metabolism; tetrahydrofolate interconversion. The protein operates within amino-acid biosynthesis; glycine biosynthesis; glycine from L-serine: step 1/1. Functionally, catalyzes the reversible interconversion of serine and glycine with tetrahydrofolate (THF) serving as the one-carbon carrier. This reaction serves as the major source of one-carbon groups required for the biosynthesis of purines, thymidylate, methionine, and other important biomolecules. Also exhibits THF-independent aldolase activity toward beta-hydroxyamino acids, producing glycine and aldehydes, via a retro-aldol mechanism. This is Serine hydroxymethyltransferase 1 from Mycobacterium tuberculosis (strain CDC 1551 / Oshkosh).